Here is a 736-residue protein sequence, read N- to C-terminus: Myosin-7 (736 aa).

The 342-residue stretch at 1 to 342 (NWMVTRINAT…LLGLLEEMRD (342 aa)) folds into the Myosin motor domain. Positions 219–241 (LNKLMTNLRSTHPHFVRCIIPNE) are actin-binding. Residues 345-374 (LSRIITRIQAQSRGVLSRMEYKKLLERRDS) enclose the IQ domain. Residues 403–736 (LLKSAETEKE…MNKKREAEFQ (334 aa)) are a coiled coil. Ser-701 bears the Phosphoserine mark. A disordered region spans residues 716-736 (EAGGATSVQIEMNKKREAEFQ). Basic and acidic residues predominate over residues 727–736 (MNKKREAEFQ).

This sequence belongs to the TRAFAC class myosin-kinesin ATPase superfamily. Myosin family. In terms of assembly, muscle myosin is a hexameric protein that consists of 2 heavy chain subunits (MHC), 2 alkali light chain subunits (MLC) and 2 regulatory light chain subunits (MLC-2). Interacts with ECPAS. Interacts (via C-terminus) with LRRC39.

It is found in the cytoplasm. The protein resides in the myofibril. It localises to the sarcomere. Its function is as follows. Myosins are actin-based motor molecules with ATPase activity essential for muscle contraction. Forms regular bipolar thick filaments that, together with actin thin filaments, constitute the fundamental contractile unit of skeletal and cardiac muscle. This is Myosin-7 (MYH7) from Oryctolagus cuniculus (Rabbit).